The sequence spans 135 residues: ATP synthase epsilon chain (135 aa).

It belongs to the ATPase epsilon chain family. In terms of assembly, F-type ATPases have 2 components, CF(1) - the catalytic core - and CF(0) - the membrane proton channel. CF(1) has five subunits: alpha(3), beta(3), gamma(1), delta(1), epsilon(1). CF(0) has three main subunits: a, b and c.

It localises to the cell inner membrane. Its function is as follows. Produces ATP from ADP in the presence of a proton gradient across the membrane. The protein is ATP synthase epsilon chain of Rhizobium leguminosarum bv. trifolii (strain WSM2304).